Here is a 359-residue protein sequence, read N- to C-terminus: Doublesex- and mab-3-related transcription factor B1 (359 aa).

The DM DNA-binding region spans 7-54 (CSRCRNHGYLVPVKGHTGKCRWKQCICDKCYLITERQKIMAAQKVLRT). 2 disordered regions span residues 111–149 (PPQA…RDRS) and 262–359 (SGLV…EQSN). Pro residues-rich tracts occupy residues 277–299 (CSPP…PQPQ) and 315–325 (LPPPPPPPSPP). Residues 348-359 (EPSQDSPQEQSN) show a composition bias toward polar residues.

It belongs to the DMRT family. In terms of tissue distribution, brain.

It is found in the nucleus. This is Doublesex- and mab-3-related transcription factor B1 (Dmrtb1) from Mus musculus (Mouse).